The following is a 507-amino-acid chain: MSVELWQQCVELLREELPAQQFNTWIRPLQVEAEGDELRVYAPNRFVLDWVNEKYLGRVLELLDEHGNGLAPSLSLLIGSKRSSAPRAAPNAPLAAAQVSQAQANAAPASAPAPAPTPAPTKRTTQKTEEISEEPSRDSFDPMAGAASQQAPVRAEQRTVQVEGALKHTSYLNRTFTFENFVEGKSNQLARAAAWQVADNPKHGYNPLFLYGGVGLGKTHLMHAVGNHLLKKNPNAKVVYLHSERFVADMVKALQLNAINEFKRFYRSVDALLIDDIQFFARKERSQEEFFHTFNALLEGGQQVILTSDRYPKEIEGLEERLKSRFGWGLTVAVEPPELETRVAILMKKADQAKVELPHDAAFFIAQRIRSNVRELEGALKRVIAHSHFMGRDITIELIRESLKDLLALQDKLVSVDNIQRTVAEYYKIKISDLLSKRRSRSVARPRQVAMALSKELTNHSLPEIGDVFGGRDHTTVLHACRKINELKESDADIREDYKNLLRTLTT.

Positions 1 to 87 (MSVELWQQCV…IGSKRSSAPR (87 aa)) are domain I, interacts with DnaA modulators. Residues 85–110 (APRAAPNAPLAAAQVSQAQANAAPAS) show a composition bias toward low complexity. The segment at 85–158 (APRAAPNAPL…QQAPVRAEQR (74 aa)) is disordered. A domain II region spans residues 87–170 (RAAPNAPLAA…QVEGALKHTS (84 aa)). Basic and acidic residues predominate over residues 126-140 (QKTEEISEEPSRDSF). The tract at residues 171–387 (YLNRTFTFEN…GALKRVIAHS (217 aa)) is domain III, AAA+ region. ATP is bound by residues Gly215, Gly217, Lys218, and Thr219. A domain IV, binds dsDNA region spans residues 388 to 507 (HFMGRDITIE…YKNLLRTLTT (120 aa)).

The protein belongs to the DnaA family. As to quaternary structure, oligomerizes as a right-handed, spiral filament on DNA at oriC.

The protein resides in the cytoplasm. Functionally, plays an essential role in the initiation and regulation of chromosomal replication. ATP-DnaA binds to the origin of replication (oriC) to initiate formation of the DNA replication initiation complex once per cell cycle. Binds the DnaA box (a 9 base pair repeat at the origin) and separates the double-stranded (ds)DNA. Forms a right-handed helical filament on oriC DNA; dsDNA binds to the exterior of the filament while single-stranded (ss)DNA is stabiized in the filament's interior. The ATP-DnaA-oriC complex binds and stabilizes one strand of the AT-rich DNA unwinding element (DUE), permitting loading of DNA polymerase. After initiation quickly degrades to an ADP-DnaA complex that is not apt for DNA replication. Binds acidic phospholipids. The protein is Chromosomal replication initiator protein DnaA of Pseudomonas fluorescens (strain Pf0-1).